The sequence spans 335 residues: MALLGRAFFAGVSRLPCDPGPQRFFSFGTKTLYQSKDAPQSKFFQPVLKPMLPPDAFQGKVAFITGGGTGLGKAMTTFLSTLGAQCVIASRNIDVLKATAEEISSKTGNKVHAIRCDVRDPDMVHNTVLELIKVAGHPDVVINNAAGNFISPSERLTPNGWKTITDIVLNGTAYVTLEIGKQLIKAQKGAAFLAITTIYAESGSGFVMPSSSAKSGVEAMNKSLAAEWGRYGMRFNIIQPGPIKTKGAFSRLDPTGRFEKEMIDRIPCGRLGTMEELANLATFLCSDYASWINGAVIRFDGGEEVFLSGEFNSLKKVTKEEWDIIEGLIRKTKGS.

The N-terminal 34 residues, 1-34 (MALLGRAFFAGVSRLPCDPGPQRFFSFGTKTLYQ), are a transit peptide targeting the mitochondrion. N6-acetyllysine; alternate occurs at positions 42 and 49. N6-succinyllysine; alternate occurs at positions 42 and 49. 66–71 (GGGTGL) contributes to the NADP(+) binding site. Thr69 bears the Phosphothreonine mark. An N6-succinyllysine modification is found at Lys73. Arg91 lines the NADP(+) pocket. Arg91 contacts substrate. Residues Lys97 and Lys106 each carry the N6-acetyllysine; alternate modification. N6-succinyllysine; alternate is present on residues Lys97 and Lys106. Asp117 is a binding site for NADP(+). Positions 119 and 149 each coordinate substrate. Tyr199 serves as the catalytic Proton acceptor. NADP(+) contacts are provided by residues Lys214 and 240-243 (PGPI). The residue at position 244 (Lys244) is an N6-acetyllysine; alternate. N6-succinyllysine; alternate is present on Lys244. Arg251 lines the substrate pocket. Lys260 carries the post-translational modification N6-acetyllysine; alternate. Lys260 carries the post-translational modification N6-succinyllysine; alternate. Lys315 carries the post-translational modification N6-acetyllysine. Lys319 bears the N6-acetyllysine; alternate mark. Residue Lys319 is modified to N6-succinyllysine; alternate.

It belongs to the short-chain dehydrogenases/reductases (SDR) family. 2,4-dienoyl-CoA reductase subfamily. Homotetramer.

The protein resides in the mitochondrion. The enzyme catalyses a (2E,4E)-dienoyl-CoA + NADPH + H(+) = a 4,5-saturated-(3E)-enoyl-CoA + NADP(+). The catalysed reaction is a (2E,4Z)-dienoyl-CoA + NADPH + H(+) = a 4,5-saturated-(3E)-enoyl-CoA + NADP(+). It carries out the reaction (2E,4E)-hexadienoyl-CoA + NADPH + H(+) = (3E)-hexenoyl-CoA + NADP(+). In terms of biological role, auxiliary enzyme of beta-oxidation. It participates in the metabolism of unsaturated fatty enoyl-CoA esters having double bonds in both even- and odd-numbered positions in mitochondria. Catalyzes the NADP-dependent reduction of 2,4-dienoyl-CoA to yield trans-3-enoyl-CoA. The sequence is that of 2,4-dienoyl-CoA reductase [(3E)-enoyl-CoA-producing], mitochondrial (Decr1) from Mus musculus (Mouse).